Consider the following 487-residue polypeptide: Meiotic recombination protein SPO11-4 (487 aa).

The disordered stretch occupies residues methionine 1–glycine 56. In terms of domain architecture, Topo IIA-type catalytic spans lysine 119–isoleucine 252. Tyrosine 213 (O-(5'-phospho-DNA)-tyrosine intermediate) is an active-site residue. Glutamate 301 and aspartate 353 together coordinate Mg(2+).

The protein belongs to the TOP6A family. Homodimer. Interacts with TOP6B. It depends on Mg(2+) as a cofactor.

Its subcellular location is the nucleus. It carries out the reaction ATP-dependent breakage, passage and rejoining of double-stranded DNA.. Functionally, required for meiotic recombination. Mediates DNA cleavage that forms the double-strand breaks (DSB) that initiate meiotic recombination. Possesses double-stranded DNA cleavage activity in vitro. This is Meiotic recombination protein SPO11-4 (SPO11-4) from Oryza sativa subsp. japonica (Rice).